The primary structure comprises 164 residues: DNA-directed RNA polymerase 19 kDa subunit (164 aa).

The segment covering 1-35 (MADTDDIIDYESDDLTEYEDDEEEEEDGESLETSD) has biased composition (acidic residues). The disordered stretch occupies residues 1-39 (MADTDDIIDYESDDLTEYEDDEEEEEDGESLETSDIDPK).

This sequence belongs to the poxviridae DNA-directed RNA polymerase 19 kDa subunit family. In terms of assembly, the DNA-dependent RNA polymerase used for intermediate and late genes expression consists of eight subunits Rpo30/OPG66, Rpo7/OPG90, Rpo22/OPG103, Rpo147/OPG105, Rpo18/OPG119, Rpo19/OPG131, Rpo132/OPG151 and Rpo35/OPG156. The same holoenzyme, with the addition of the transcription-specificity factor OPG109, is used for early gene expression.

Its subcellular location is the virion. The enzyme catalyses RNA(n) + a ribonucleoside 5'-triphosphate = RNA(n+1) + diphosphate. Part of the DNA-dependent RNA polymerase which catalyzes the transcription of viral DNA into RNA using the four ribonucleoside triphosphates as substrates. Responsible for the transcription of early, intermediate and late genes. DNA-dependent RNA polymerase associates with the early transcription factor (ETF), itself composed of OPG118 and OPG133, thereby allowing the early genes transcription. Late transcription, and probably also intermediate transcription, require newly synthesized RNA polymerase. The sequence is that of DNA-directed RNA polymerase 19 kDa subunit (OPG131) from Homo sapiens (Human).